The chain runs to 391 residues: Arrestin-C (391 aa).

A compositionally biased stretch (basic and acidic residues) spans 369–379; that stretch reads ARQEPGGREES. The segment at 369 to 391 is disordered; it reads ARQEPGGREESQEALAAEGDEGS.

Belongs to the arrestin family. As to quaternary structure, homodimer; disulfide-linked in response to retinal illumination. Interacts with CXCR4; the interaction is dependent on the C-terminal phosphorylation of CXCR4 and modulates the calcium ion mobilization activity of CXCR4. Interacts with GPR84.

It is found in the photoreceptor inner segment. Its subcellular location is the cell projection. The protein resides in the cilium. It localises to the photoreceptor outer segment. May play a role in an as yet undefined retina-specific signal transduction. Could bind to photoactivated-phosphorylated red/green opsins. The protein is Arrestin-C (ARR3) of Sus scrofa (Pig).